The sequence spans 84 residues: Small ribosomal subunit protein uS17 (84 aa).

The protein belongs to the universal ribosomal protein uS17 family. In terms of assembly, part of the 30S ribosomal subunit.

In terms of biological role, one of the primary rRNA binding proteins, it binds specifically to the 5'-end of 16S ribosomal RNA. This Borrelia garinii subsp. bavariensis (strain ATCC BAA-2496 / DSM 23469 / PBi) (Borreliella bavariensis) protein is Small ribosomal subunit protein uS17.